Reading from the N-terminus, the 1586-residue chain is MRNNWNWLIFLVPFILSLTTAYTPDISVVKNKSPAREIKYFDDSSNLLVLRDEHLLISKNDGKSFEEIPDIKDPIIYFEMDPTNKNRAFAMTLSQKQYITEDQGNKWRTFEIDIFNGEMASIPKITFNFENPNYLMISNYECPEGQRLNRNCKHRYFFTKDGFKSKPNKLPVDAHVCRFAKSTKTSKIGKSETIFCTVNQLNSYGHIVESHLYNSNDFFQNKNEIKIKPLDSSSGEIIDVKIEEDFMIVVSRMDKFNEKSLINAYVSRDGENFVRADLDIDIKYGVMSFLPSSVSSLFLTIMDFNSRAFQTASFYGSDSSGLHFTKLLDNVAGGNIQKIENIDGAWIANIGVDSNNPYDGDESLLDNLFGGTYAKSIVSKVSINDGKDWSLIKLNDNSCKIEDECSLHLWDFTELDGEGKFVTGPTPGILLGVGNKGKNLAHEFEKMKTYVSRDGGVTWNKALDFPAVFAFGDQGNVILAVPYNGKKKYEAAKHFYFSLDQGKSWEKVDLEHPIYPLSILTTIDGTSRKFIIGGIDDSRRAENEYIYSVDFTNAFDGKTCGDDDFEEFVARKSNDNGNDEPLCVYGHREKFRRRKQDAKCFVNKLFEDIKVIEDPCQCTEHDFECGPGFRLSEKESTNVCVPDRKQLTQLCQSKSEITLPNKVLVEGNKCNMGDKKLEDFVSQETLKCSDYVDNGGDGNGDEKNPNQGDSNQIEVHINDFEGKLSQYQYIAESKDNNAADNVVIKTMDDRLWISNNGGVSFVRVPISDKILGFYAGPIPGQITLITATNIIYVSDDGGATFIKRKVPTQPSPRVDRAIAFHSKNVERFIWFGEECESNGRCTSNAYITDDAGATFNKLMANVRTCDYVGAVLESGDHELIYCSGQNSLDNNNNNNKNKNKLALFSLKESSSEEPKKIFENIVGYAITGTYVVVATIDDKTDSLLSKVTVDGDIFADADFPHDLKVEPHQAFTVLDSSSKAVFMHVTTNEKPNFEYGQLLKSNSNGTYFVLTLDNVNRNTVGYVDFDKIDGLEGTIIANVVANAQANEGTKNLQTLISHNDGSEWDKLVPPTIDSEGIKYPCTGQSLNKCALHLHGFTERADYRDTFSSGSATGFLIGVGNVGEFLTPMDDPSTATFLSTDGGVTWKEIKKGVYMWEYGDQGTILVLVNAVENTDVLYYSLDEGQTWKEYKFSEYKVNIYDLATVPTDTARKFIIFAENPKDHRDIQTFTIDFTNIYPRQCQLNLDDPEHDDYEYWSPTHPIGGDKCIFGHESKYLRRAKGHTDCFIGSAPLSEGYKLEKNCSCTRRDYECDYNYVRDVNDNTCKLVKGMTSADRKTTMCSKENAFQYFESTGYRKIPLSTCKGGQQFDNWNPKPCPGKEKQFNEYYGREVKGHKLFFLIFIPLIIFLATVLFVYDRGIRRNGGFKRLGQIRLNDDDDDFNPIENDQIDVVVNKIVKGGVYTVAVLIATVKTIRKIDRMMLEKLGNVIFRRSPGRRNYVSVPNDLDEEEELFGDYQDNLDDELEDAVFNQDDNLVRTPFADDVEEEEEEREGEGEGEQSNPSDERLFDIDDNEDEDEQHEVNKPTTS.

The signal sequence occupies residues 1 to 21; that stretch reads MRNNWNWLIFLVPFILSLTTA. Residues 22–1394 lie on the Lumenal side of the membrane; sequence YTPDISVVKN…YYGREVKGHK (1373 aa). BNR repeat units follow at residues 450–460 and 496–507; these read YVSRDGGVTWN and YFSLDQGKSWEK. Residues 692-711 form a disordered region; the sequence is VDNGGDGNGDEKNPNQGDSN. 2 BNR repeats span residues 792–801 and 846–856; these read YVSDDGGATF and YITDDAGATFN. Asn1004 carries an N-linked (GlcNAc...) asparagine glycan. 2 BNR repeats span residues 1136 to 1146 and 1177 to 1187; these read FLSTDGGVTWK and YYSLDEGQTWK. N-linked (GlcNAc...) asparagine glycosylation is present at Asn1300. The helical transmembrane segment at 1395–1415 threads the bilayer; the sequence is LFFLIFIPLIIFLATVLFVYD. Residues 1416–1586 lie on the Cytoplasmic side of the membrane; that stretch reads RGIRRNGGFK…QHEVNKPTTS (171 aa). Residues 1527–1586 are disordered; that stretch reads FNQDDNLVRTPFADDVEEEEEEREGEGEGEQSNPSDERLFDIDDNEDEDEQHEVNKPTTS. Acidic residues-rich tracts occupy residues 1540–1555 and 1568–1577; these read DDVE…EGEG and IDDNEDEDEQ.

It belongs to the VPS10-related sortilin family.

It localises to the golgi apparatus. Its subcellular location is the trans-Golgi network membrane. The protein localises to the prevacuolar compartment membrane. Its function is as follows. Functions as a sorting receptor in the Golgi compartment required for the intracellular sorting and delivery of soluble vacuolar proteins, like carboxypeptidase Y (CPY) and proteinase A. Executes multiple rounds of sorting by cycling between the late Golgi and a prevacuolar endosome-like compartment. The sequence is that of Vacuolar protein sorting/targeting protein 10 (VPS10) from Candida albicans (strain WO-1) (Yeast).